The following is a 426-amino-acid chain: Serine--tRNA ligase (426 aa).

233 to 235 (TSE) serves as a coordination point for L-serine. 264 to 266 (RAE) contributes to the ATP binding site. E287 provides a ligand contact to L-serine. 351–354 (EISS) lines the ATP pocket. Residue S387 coordinates L-serine.

It belongs to the class-II aminoacyl-tRNA synthetase family. Type-1 seryl-tRNA synthetase subfamily. Homodimer. The tRNA molecule binds across the dimer.

It localises to the cytoplasm. The catalysed reaction is tRNA(Ser) + L-serine + ATP = L-seryl-tRNA(Ser) + AMP + diphosphate + H(+). It carries out the reaction tRNA(Sec) + L-serine + ATP = L-seryl-tRNA(Sec) + AMP + diphosphate + H(+). It participates in aminoacyl-tRNA biosynthesis; selenocysteinyl-tRNA(Sec) biosynthesis; L-seryl-tRNA(Sec) from L-serine and tRNA(Sec): step 1/1. In terms of biological role, catalyzes the attachment of serine to tRNA(Ser). Is also able to aminoacylate tRNA(Sec) with serine, to form the misacylated tRNA L-seryl-tRNA(Sec), which will be further converted into selenocysteinyl-tRNA(Sec). The protein is Serine--tRNA ligase of Xanthomonas campestris pv. campestris (strain 8004).